The sequence spans 467 residues: Cysteine--tRNA ligase (467 aa).

Cys-30 provides a ligand contact to Zn(2+). A 'HIGH' region motif is present at residues 32–42; sequence PTVYDDSHLGH. Zn(2+) is bound by residues Cys-209, His-239, and Glu-243. The 'KMSKS' region motif lies at 271–275; that stretch reads KMSKS. Residue Lys-274 participates in ATP binding.

Belongs to the class-I aminoacyl-tRNA synthetase family. As to quaternary structure, monomer. The cofactor is Zn(2+).

The protein localises to the cytoplasm. It catalyses the reaction tRNA(Cys) + L-cysteine + ATP = L-cysteinyl-tRNA(Cys) + AMP + diphosphate. This Aliarcobacter butzleri (strain RM4018) (Arcobacter butzleri) protein is Cysteine--tRNA ligase.